A 732-amino-acid polypeptide reads, in one-letter code: Iron-sulfur clusters transporter ATM1, mitochondrial (732 aa).

The N-terminal 55 residues, 1 to 55, are a transit peptide targeting the mitochondrion; the sequence is MGFGSCSRHALFTPAAFSGSFTTMTTSCFKRVYTAQIHGGDALGKRLPSVSSFSG. The Mitochondrial matrix segment spans residues 56–143; sequence QLPRHGLHRQ…KNNPNVKFRV (88 aa). Residues 71-114 form a disordered region; that stretch reads STSHRRQTSPPPSPRTTSQSPTVPSKASTTPPTSLNTSKPIATE. Low complexity predominate over residues 85–95; the sequence is RTTSQSPTVPS. The segment covering 96 to 114 has biased composition (polar residues); the sequence is KASTTPPTSLNTSKPIATE. Residues 144–164 traverse the membrane as a helical segment; it reads IGALTLLVAGKVLNVQVPFFF. An ABC transmembrane type-1 domain is found at 144–432; that stretch reads IGALTLLVAG…LGTVYRELRQ (289 aa). Over 165–181 the chain is Mitochondrial intermembrane; the sequence is KTIVDSLNVPITESTTV. A helical membrane pass occupies residues 182-202; that stretch reads WVLAGASIAGYGAARILTTLF. Residues 203–262 are Mitochondrial matrix-facing; the sequence is GELRNAVFASVAQNAIRKVARETFEHLLNMDMKFHLERQTGGLTRAIDRGTKGISFILSS. The chain crosses the membrane as a helical span at residues 263 to 283; it reads IVFHVIPTALEISMVCGILSW. Position 284 (K284) is a topological domain, mitochondrial intermembrane. Residues 285–305 traverse the membrane as a helical segment; the sequence is FGWDFAAVTAITMLLYTWFTI. At 306–378 the chain is on the mitochondrial matrix side; sequence KTTAWRTTFR…SLAALNSGQN (73 aa). Glutathione is bound by residues 311–315 and 374–377; these read RTTFR and NSGQ. Residues 379–399 traverse the membrane as a helical segment; that stretch reads FIFSSALTMMMLLGAQGIVKG. At 400–405 the chain is on the mitochondrial intermembrane side; sequence TMTVGD. Residues 406–426 form a helical membrane-spanning segment; that stretch reads LVLVNQLVFQLSLPLNFLGTV. G424 is a glutathione binding site. The Mitochondrial matrix portion of the chain corresponds to 427-732; that stretch reads YRELRQSLID…LEVVDEKKKQ (306 aa). Residues 466-702 enclose the ABC transporter domain; sequence IEFRNVAFAY…PGGVYHRLWQ (237 aa). Residues Y475 and 499–506 contribute to the ATP site; that span reads GPSGCGKS. The disordered stretch occupies residues 708–732; sequence STQPTDEEIERQREELEVVDEKKKQ. Positions 717–732 are enriched in basic and acidic residues; sequence ERQREELEVVDEKKKQ.

This sequence belongs to the ABC transporter superfamily. ABCB family. Heavy Metal importer (TC 3.A.1.210) subfamily. Homodimer.

It is found in the mitochondrion inner membrane. In terms of biological role, performs an essential function in the generation of cytoplasmic iron-sulfur proteins by mediating the ATP-dependent export of mitochondrial Fe/S cluster precursors synthesized by NFS1 and other mitochondrial proteins. Hydrolyzes ATP. Binds glutathione and may function by transporting a glutathione-conjugated iron-sulfur compound. Plays a role during copper stress, in a manner dependent on the copper metalloregulatory transcription factor CUF1. In Cryptococcus neoformans var. grubii serotype A (strain H99 / ATCC 208821 / CBS 10515 / FGSC 9487) (Filobasidiella neoformans var. grubii), this protein is Iron-sulfur clusters transporter ATM1, mitochondrial.